The following is a 266-amino-acid chain: MPNITVTSLLAMKQKGEKITMLTCYDATFAHTASQAGVEVLLIGDSLGMVLQGHDSTLPVTTAETAYHVACVKRGNQGAMILADLPFMANATLEQTLINSATLMQAGAHMIKVEGAAWLAESIRLLAERGIPVCAHMGLTPQAVNVLGGYKVQGRLETQARQMRADAIALEQAGAAMILLECVPSELAEEITQAVKVPVIGIGAGSATDGQVLVLHDMLGLSITGRVPKFVKNFMTGQPDIQSAIRAYVTAVKDLSFPATEHGFSA.

Positions 45 and 84 each coordinate Mg(2+). Residues 45–46, Asp84, and Lys112 contribute to the 3-methyl-2-oxobutanoate site; that span reads DS. Glu114 serves as a coordination point for Mg(2+). The active-site Proton acceptor is the Glu181.

It belongs to the PanB family. As to quaternary structure, homodecamer; pentamer of dimers. Mg(2+) is required as a cofactor.

It is found in the cytoplasm. The catalysed reaction is 3-methyl-2-oxobutanoate + (6R)-5,10-methylene-5,6,7,8-tetrahydrofolate + H2O = 2-dehydropantoate + (6S)-5,6,7,8-tetrahydrofolate. It functions in the pathway cofactor biosynthesis; (R)-pantothenate biosynthesis; (R)-pantoate from 3-methyl-2-oxobutanoate: step 1/2. Catalyzes the reversible reaction in which hydroxymethyl group from 5,10-methylenetetrahydrofolate is transferred onto alpha-ketoisovalerate to form ketopantoate. This is 3-methyl-2-oxobutanoate hydroxymethyltransferase from Pseudomonas syringae pv. syringae (strain B728a).